A 143-amino-acid polypeptide reads, in one-letter code: Crossover junction endodeoxyribonuclease Hjc (143 aa).

Glu-12 provides a ligand contact to Mg(2+). Ser-32 is an active-site residue. Residues Asp-42 and Glu-55 each coordinate Mg(2+).

Belongs to the Holliday junction resolvase Hjc family. As to quaternary structure, homodimer. Requires Mg(2+) as cofactor.

It carries out the reaction Endonucleolytic cleavage at a junction such as a reciprocal single-stranded crossover between two homologous DNA duplexes (Holliday junction).. A structure-specific endonuclease that resolves Holliday junction (HJ) intermediates during genetic recombination. Cleaves 4-way DNA junctions introducing paired nicks in opposing strands, leaving a 5'-terminal phosphate and a 3'-terminal hydroxyl group that are subsequently ligated to produce recombinant products. In terms of biological role, hjc, Hjm (Hel308) and PINA coordinate HJ migration and cleavage of replication forks in a coordinated way. The sequence is that of Crossover junction endodeoxyribonuclease Hjc from Saccharolobus islandicus (strain REY15A) (Sulfolobus islandicus).